The sequence spans 398 residues: Probable peptidoglycan glycosyltransferase FtsW (398 aa).

Residues 1-25 (MCYGGTAMMAFADIKEALTPKPSAQ) are Cytoplasmic-facing. A helical membrane pass occupies residues 26–46 (LYDVPLLYCMLMLMGVGFVMV). At 47–69 (TSASMPTADRLFGNIYHFTIRHG) the chain is on the periplasmic side. Residues 70–90 (IFLALSFCLFWITTSVPMSWW) form a helical membrane-spanning segment. K91 is a topological domain (cytoplasmic). Residues 92-112 (KANPYLLLVGLGLLLIVLIVG) traverse the membrane as a helical segment. At 113-120 (REVNGSTR) the chain is on the periplasmic side. The chain crosses the membrane as a helical span at residues 121-141 (WIPIGPFNIQASELAKLFFFS). The Cytoplasmic portion of the chain corresponds to 142-156 (YISGYLVRKRSEVQE). Residues 157 to 177 (NIKGFIKPILVFAAYAGLILM) traverse the membrane as a helical segment. Over 178-179 (QP) the chain is Periplasmic. Residues 180-200 (DLGTVVVMFVTTVGLLFLAGA) traverse the membrane as a helical segment. Residue K201 is a topological domain, cytoplasmic. The helical transmembrane segment at 202 to 222 (LWQFFVLILTGVALVIGLIVL) threads the bilayer. Residues 223-289 (EPYRMARVIG…DFIFAVIAEE (67 aa)) are Periplasmic-facing. The chain crosses the membrane as a helical span at residues 290 to 312 (LGFVGVSSILIVLGTLVFRALLI). Over 313–324 (GQNALKNGKEYE) the chain is Cytoplasmic. A helical membrane pass occupies residues 325–345 (GYLALAIGIWFAFQTMVNVGA). Residues 346–356 (SAGILPTKGLT) are Periplasmic-facing. Residues 357–377 (LPFISYGGSSLLMMTIAAGIL) traverse the membrane as a helical segment. Over 378–398 (LRVDFETKMATKQATSGGAKR) the chain is Cytoplasmic.

This sequence belongs to the SEDS family. FtsW subfamily.

It is found in the cell inner membrane. It carries out the reaction [GlcNAc-(1-&gt;4)-Mur2Ac(oyl-L-Ala-gamma-D-Glu-L-Lys-D-Ala-D-Ala)](n)-di-trans,octa-cis-undecaprenyl diphosphate + beta-D-GlcNAc-(1-&gt;4)-Mur2Ac(oyl-L-Ala-gamma-D-Glu-L-Lys-D-Ala-D-Ala)-di-trans,octa-cis-undecaprenyl diphosphate = [GlcNAc-(1-&gt;4)-Mur2Ac(oyl-L-Ala-gamma-D-Glu-L-Lys-D-Ala-D-Ala)](n+1)-di-trans,octa-cis-undecaprenyl diphosphate + di-trans,octa-cis-undecaprenyl diphosphate + H(+). It participates in cell wall biogenesis; peptidoglycan biosynthesis. Its function is as follows. Peptidoglycan polymerase that is essential for cell division. This Pseudoalteromonas translucida (strain TAC 125) protein is Probable peptidoglycan glycosyltransferase FtsW.